A 618-amino-acid chain; its full sequence is Chaperone protein HscA homolog (618 aa).

The protein belongs to the heat shock protein 70 family.

In terms of biological role, chaperone involved in the maturation of iron-sulfur cluster-containing proteins. Has a low intrinsic ATPase activity which is markedly stimulated by HscB. The polypeptide is Chaperone protein HscA homolog (Methylibium petroleiphilum (strain ATCC BAA-1232 / LMG 22953 / PM1)).